A 251-amino-acid polypeptide reads, in one-letter code: Tryptophan synthase alpha chain (251 aa).

Catalysis depends on proton acceptor residues Glu-46 and Asp-57.

Belongs to the TrpA family. In terms of assembly, tetramer of two alpha and two beta chains.

It catalyses the reaction (1S,2R)-1-C-(indol-3-yl)glycerol 3-phosphate + L-serine = D-glyceraldehyde 3-phosphate + L-tryptophan + H2O. It functions in the pathway amino-acid biosynthesis; L-tryptophan biosynthesis; L-tryptophan from chorismate: step 5/5. In terms of biological role, the alpha subunit is responsible for the aldol cleavage of indoleglycerol phosphate to indole and glyceraldehyde 3-phosphate. This chain is Tryptophan synthase alpha chain, found in Karelsulcia muelleri (strain GWSS) (Sulcia muelleri).